Reading from the N-terminus, the 444-residue chain is tRNA modification GTPase MnmE (444 aa).

(6S)-5-formyl-5,6,7,8-tetrahydrofolate-binding residues include Arg-23, Glu-82, and Lys-121. Residues 216 to 365 (GTSIVLAGLP…LKQALQKWLN (150 aa)) form the TrmE-type G domain. Position 226 (Asn-226) interacts with K(+). Residues 226–231 (NAGKSS), 245–251 (TDIPGTT), and 270–273 (DSAG) each bind GTP. Mg(2+) is bound at residue Ser-230. The K(+) site is built by Thr-245, Ile-247, and Thr-250. Residue Thr-251 coordinates Mg(2+). Lys-444 is a binding site for (6S)-5-formyl-5,6,7,8-tetrahydrofolate.

Belongs to the TRAFAC class TrmE-Era-EngA-EngB-Septin-like GTPase superfamily. TrmE GTPase family. In terms of assembly, homodimer. Heterotetramer of two MnmE and two MnmG subunits. K(+) is required as a cofactor.

It is found in the cytoplasm. Functionally, exhibits a very high intrinsic GTPase hydrolysis rate. Involved in the addition of a carboxymethylaminomethyl (cmnm) group at the wobble position (U34) of certain tRNAs, forming tRNA-cmnm(5)s(2)U34. This Chlamydia trachomatis serovar A (strain ATCC VR-571B / DSM 19440 / HAR-13) protein is tRNA modification GTPase MnmE.